A 248-amino-acid chain; its full sequence is Cutinase cut1 (248 aa).

The N-terminal stretch at 1–17 (MRSLSLFTALLAGQAFA) is a signal peptide. Cys79 and Cys153 are joined by a disulfide. The Nucleophile role is filled by Ser164. The cysteines at positions 212 and 219 are disulfide-linked. Asp216 is an active-site residue. The active-site Proton donor/acceptor is the His229.

This sequence belongs to the cutinase family. In terms of processing, the 2 disulfide bonds play a critical role in holding the catalytic residues in juxta-position; reduction of the disulfide bridges results in the complete inactivation of the enzyme.

It is found in the secreted. It catalyses the reaction cutin + H2O = cutin monomers.. In terms of biological role, catalyzes the hydrolysis of complex carboxylic polyesters found in the cell wall of plants. May degrade cutin, a macromolecule that forms the structure of the plant cuticle. May also degrade suberin, a specialized macromolecule found in the cell wall of various plant tissues. The sequence is that of Cutinase cut1 from Trichoderma harzianum (Hypocrea lixii).